A 116-amino-acid polypeptide reads, in one-letter code: Large ribosomal subunit protein bL17 (116 aa).

This sequence belongs to the bacterial ribosomal protein bL17 family. Part of the 50S ribosomal subunit. Contacts protein L32.

In Trichormus variabilis (strain ATCC 29413 / PCC 7937) (Anabaena variabilis), this protein is Large ribosomal subunit protein bL17.